A 144-amino-acid chain; its full sequence is Small ribosomal subunit protein uS12 (144 aa).

A 3-methylthioaspartic acid modification is found at aspartate 103. Positions 121–144 (VANRKQGRSKYGTKKASAVPAKKK) are disordered.

The protein belongs to the universal ribosomal protein uS12 family. Part of the 30S ribosomal subunit. Contacts proteins S8 and S17. May interact with IF1 in the 30S initiation complex.

In terms of biological role, with S4 and S5 plays an important role in translational accuracy. Interacts with and stabilizes bases of the 16S rRNA that are involved in tRNA selection in the A site and with the mRNA backbone. Located at the interface of the 30S and 50S subunits, it traverses the body of the 30S subunit contacting proteins on the other side and probably holding the rRNA structure together. The combined cluster of proteins S8, S12 and S17 appears to hold together the shoulder and platform of the 30S subunit. This is Small ribosomal subunit protein uS12 from Roseiflexus castenholzii (strain DSM 13941 / HLO8).